Here is a 503-residue protein sequence, read N- to C-terminus: Probable cytosol aminopeptidase (503 aa).

The Mn(2+) site is built by Lys270 and Asp275. The active site involves Lys282. Mn(2+) is bound by residues Asp293, Asp352, and Glu354. Arg356 is an active-site residue.

Belongs to the peptidase M17 family. It depends on Mn(2+) as a cofactor.

The protein resides in the cytoplasm. The enzyme catalyses Release of an N-terminal amino acid, Xaa-|-Yaa-, in which Xaa is preferably Leu, but may be other amino acids including Pro although not Arg or Lys, and Yaa may be Pro. Amino acid amides and methyl esters are also readily hydrolyzed, but rates on arylamides are exceedingly low.. It carries out the reaction Release of an N-terminal amino acid, preferentially leucine, but not glutamic or aspartic acids.. Functionally, presumably involved in the processing and regular turnover of intracellular proteins. Catalyzes the removal of unsubstituted N-terminal amino acids from various peptides. The protein is Probable cytosol aminopeptidase of Salmonella typhi.